The sequence spans 480 residues: Aspartyl/glutamyl-tRNA(Asn/Gln) amidotransferase subunit B (480 aa).

The protein belongs to the GatB/GatE family. GatB subfamily. As to quaternary structure, heterotrimer of A, B and C subunits.

The catalysed reaction is L-glutamyl-tRNA(Gln) + L-glutamine + ATP + H2O = L-glutaminyl-tRNA(Gln) + L-glutamate + ADP + phosphate + H(+). It carries out the reaction L-aspartyl-tRNA(Asn) + L-glutamine + ATP + H2O = L-asparaginyl-tRNA(Asn) + L-glutamate + ADP + phosphate + 2 H(+). In terms of biological role, allows the formation of correctly charged Asn-tRNA(Asn) or Gln-tRNA(Gln) through the transamidation of misacylated Asp-tRNA(Asn) or Glu-tRNA(Gln) in organisms which lack either or both of asparaginyl-tRNA or glutaminyl-tRNA synthetases. The reaction takes place in the presence of glutamine and ATP through an activated phospho-Asp-tRNA(Asn) or phospho-Glu-tRNA(Gln). The sequence is that of Aspartyl/glutamyl-tRNA(Asn/Gln) amidotransferase subunit B from Streptococcus pneumoniae (strain Hungary19A-6).